The chain runs to 429 residues: Adenosylhomocysteinase (429 aa).

The substrate site is built by threonine 64, aspartate 136, and glutamate 161. NAD(+) is bound at residue 162–164; it reads TTT. 2 residues coordinate substrate: lysine 191 and aspartate 195. NAD(+) is bound by residues asparagine 196, 225-230, glutamate 248, asparagine 283, 304-306, and asparagine 351; these read GYGWCG and SGH.

Belongs to the adenosylhomocysteinase family. Requires NAD(+) as cofactor.

It localises to the cytoplasm. It catalyses the reaction S-adenosyl-L-homocysteine + H2O = L-homocysteine + adenosine. Its pathway is amino-acid biosynthesis; L-homocysteine biosynthesis; L-homocysteine from S-adenosyl-L-homocysteine: step 1/1. In terms of biological role, may play a key role in the regulation of the intracellular concentration of adenosylhomocysteine. The polypeptide is Adenosylhomocysteinase (Gloeothece citriformis (strain PCC 7424) (Cyanothece sp. (strain PCC 7424))).